Reading from the N-terminus, the 183-residue chain is ATP synthase subunit delta (183 aa).

This sequence belongs to the ATPase delta chain family. In terms of assembly, F-type ATPases have 2 components, F(1) - the catalytic core - and F(0) - the membrane proton channel. F(1) has five subunits: alpha(3), beta(3), gamma(1), delta(1), epsilon(1). F(0) has three main subunits: a(1), b(2) and c(10-14). The alpha and beta chains form an alternating ring which encloses part of the gamma chain. F(1) is attached to F(0) by a central stalk formed by the gamma and epsilon chains, while a peripheral stalk is formed by the delta and b chains.

The protein resides in the cell inner membrane. Functionally, f(1)F(0) ATP synthase produces ATP from ADP in the presence of a proton or sodium gradient. F-type ATPases consist of two structural domains, F(1) containing the extramembraneous catalytic core and F(0) containing the membrane proton channel, linked together by a central stalk and a peripheral stalk. During catalysis, ATP synthesis in the catalytic domain of F(1) is coupled via a rotary mechanism of the central stalk subunits to proton translocation. This protein is part of the stalk that links CF(0) to CF(1). It either transmits conformational changes from CF(0) to CF(1) or is implicated in proton conduction. The chain is ATP synthase subunit delta from Thermosipho africanus (strain TCF52B).